The chain runs to 147 residues: Hemoglobin subunit beta-H1 (147 aa).

The 145-residue stretch at 3–147 (HFTAEEKAAI…VANALSHKYH (145 aa)) folds into the Globin domain. Residues His-64 and His-93 each contribute to the heme b site.

It belongs to the globin family. As to quaternary structure, heterotetramer of two alpha chains and two beta chains. In terms of tissue distribution, red blood cells.

Functionally, this is an embryonic beta-type chain. This chain is Hemoglobin subunit beta-H1 (Hbb-bh1), found in Mus musculus (Mouse).